The chain runs to 73 residues: Translation initiation factor IF-1 (73 aa).

In terms of domain architecture, S1-like spans 1-73; the sequence is MAKKDGVIEL…ARGRIVYRYK (73 aa).

The protein belongs to the IF-1 family. As to quaternary structure, component of the 30S ribosomal translation pre-initiation complex which assembles on the 30S ribosome in the order IF-2 and IF-3, IF-1 and N-formylmethionyl-tRNA(fMet); mRNA recruitment can occur at any time during PIC assembly.

It localises to the cytoplasm. One of the essential components for the initiation of protein synthesis. Stabilizes the binding of IF-2 and IF-3 on the 30S subunit to which N-formylmethionyl-tRNA(fMet) subsequently binds. Helps modulate mRNA selection, yielding the 30S pre-initiation complex (PIC). Upon addition of the 50S ribosomal subunit IF-1, IF-2 and IF-3 are released leaving the mature 70S translation initiation complex. The chain is Translation initiation factor IF-1 from Tropheryma whipplei (strain TW08/27) (Whipple's bacillus).